The following is a 464-amino-acid chain: ATP synthase subunit beta (464 aa).

152–159 (GGAGVGKT) provides a ligand contact to ATP.

Belongs to the ATPase alpha/beta chains family. F-type ATPases have 2 components, CF(1) - the catalytic core - and CF(0) - the membrane proton channel. CF(1) has five subunits: alpha(3), beta(3), gamma(1), delta(1), epsilon(1). CF(0) has three main subunits: a(1), b(2) and c(9-12). The alpha and beta chains form an alternating ring which encloses part of the gamma chain. CF(1) is attached to CF(0) by a central stalk formed by the gamma and epsilon chains, while a peripheral stalk is formed by the delta and b chains.

It is found in the cell membrane. It catalyses the reaction ATP + H2O + 4 H(+)(in) = ADP + phosphate + 5 H(+)(out). Produces ATP from ADP in the presence of a proton gradient across the membrane. The catalytic sites are hosted primarily by the beta subunits. The sequence is that of ATP synthase subunit beta from Clostridioides difficile (strain 630) (Peptoclostridium difficile).